Here is a 484-residue protein sequence, read N- to C-terminus: RNA polymerase sigma-54 factor 1 (484 aa).

The segment at residues 355–374 (NLKAVAEAIQMHESTVSRVT) is a DNA-binding region (H-T-H motif). The RPON box signature appears at 444–452 (ARRTVAKYR). The tract at residues 464-484 (RRDNMWSTMNSRASGGTGLDK) is disordered. The segment covering 468-477 (MWSTMNSRAS) has biased composition (polar residues).

Belongs to the sigma-54 factor family.

Its function is as follows. Sigma factors are initiation factors that promote the attachment of RNA polymerase to specific initiation sites and are then released. This sigma factor is responsible for the expression of the nitrogen fixation genes. This Bradyrhizobium diazoefficiens (strain JCM 10833 / BCRC 13528 / IAM 13628 / NBRC 14792 / USDA 110) protein is RNA polymerase sigma-54 factor 1 (rpoN1).